A 150-amino-acid chain; its full sequence is Truncated transcription factor CAULIFLOWER A (150 aa).

Positions 1-61 constitute an MADS-box domain; that stretch reads MGRGRVEMKR…GKLFEYSSES (61 aa). The region spanning 90–150 is the K-box; partial domain; sequence QTNWSMEYSR…IRSRKNQLMH (61 aa).

In terms of assembly, homodimer capable of binding to CArG-box sequences. As to expression, expressed in some of the meristems of arrest-stage cauliflower heads.

The protein localises to the nucleus. Functionally, probable transcription factor that promotes early floral meristem identity in synergy with APETALA1, FRUITFULL and LEAFY. Is required subsequently for the transition of an inflorescence meristem into a floral meristem. Seems to be partially redundant to the function of APETALA1. This is Truncated transcription factor CAULIFLOWER A (CAL-A) from Brassica oleracea var. botrytis (Cauliflower).